The following is a 418-amino-acid chain: D-amino acid dehydrogenase (418 aa).

3–17 is a binding site for FAD; sequence VLVLGAGVAGVSSAW.

It belongs to the DadA oxidoreductase family. FAD is required as a cofactor.

It catalyses the reaction a D-alpha-amino acid + A + H2O = a 2-oxocarboxylate + AH2 + NH4(+). Oxidative deamination of D-amino acids. The chain is D-amino acid dehydrogenase from Neisseria meningitidis serogroup A / serotype 4A (strain DSM 15465 / Z2491).